Here is a 304-residue protein sequence, read N- to C-terminus: Methionyl-tRNA formyltransferase (304 aa).

107–110 (SLLP) is a binding site for (6S)-5,6,7,8-tetrahydrofolate.

The protein belongs to the Fmt family.

The enzyme catalyses L-methionyl-tRNA(fMet) + (6R)-10-formyltetrahydrofolate = N-formyl-L-methionyl-tRNA(fMet) + (6S)-5,6,7,8-tetrahydrofolate + H(+). Attaches a formyl group to the free amino group of methionyl-tRNA(fMet). The formyl group appears to play a dual role in the initiator identity of N-formylmethionyl-tRNA by promoting its recognition by IF2 and preventing the misappropriation of this tRNA by the elongation apparatus. In Coprothermobacter proteolyticus (strain ATCC 35245 / DSM 5265 / OCM 4 / BT), this protein is Methionyl-tRNA formyltransferase.